Here is a 338-residue protein sequence, read N- to C-terminus: Anthranilate phosphoribosyltransferase (338 aa).

5-phospho-alpha-D-ribose 1-diphosphate-binding positions include Gly81, 84–85 (GD), Thr89, 91–94 (NIST), 109–117 (KHGNRALSS), and Ala121. Position 81 (Gly81) interacts with anthranilate. Ser93 lines the Mg(2+) pocket. Asn112 lines the anthranilate pocket. Residue Arg167 coordinates anthranilate. 2 residues coordinate Mg(2+): Asp225 and Glu226.

It belongs to the anthranilate phosphoribosyltransferase family. In terms of assembly, homodimer. It depends on Mg(2+) as a cofactor.

It carries out the reaction N-(5-phospho-beta-D-ribosyl)anthranilate + diphosphate = 5-phospho-alpha-D-ribose 1-diphosphate + anthranilate. It functions in the pathway amino-acid biosynthesis; L-tryptophan biosynthesis; L-tryptophan from chorismate: step 2/5. Functionally, catalyzes the transfer of the phosphoribosyl group of 5-phosphorylribose-1-pyrophosphate (PRPP) to anthranilate to yield N-(5'-phosphoribosyl)-anthranilate (PRA). In Rhizobium etli (strain ATCC 51251 / DSM 11541 / JCM 21823 / NBRC 15573 / CFN 42), this protein is Anthranilate phosphoribosyltransferase.